The sequence spans 418 residues: RuvB-like helicase 2 (418 aa).

Residue 65–72 (GDRGSGKT) participates in ATP binding.

The protein belongs to the RuvB family. In terms of assembly, component of the SWR1 chromatin remodeling complex, the INO80 chromatin remodeling complex, and of the R2TP complex.

The protein localises to the nucleus. It catalyses the reaction ATP + H2O = ADP + phosphate + H(+). In terms of biological role, DNA helicase which participates in several chromatin remodeling complexes, including the SWR1 and the INO80 complexes. The SWR1 complex mediates the ATP-dependent exchange of histone H2A for the H2A variant HZT1 leading to transcriptional regulation of selected genes by chromatin remodeling. The INO80 complex remodels chromatin by shifting nucleosomes and is involved in DNA repair. Also involved in pre-rRNA processing. This is RuvB-like helicase 2 (RVB2) from Encephalitozoon cuniculi (strain GB-M1) (Microsporidian parasite).